The chain runs to 441 residues: Probable magnesium transporter NIPA8 (441 aa).

Residues 1 to 4 (MGEW) are Extracellular-facing. Residues 5–25 (VIGAFINIFGSVAINFGTNLL) form a helical membrane-spanning segment. The Cytoplasmic segment spans residues 26–56 (KLGHNERERLALQDGGGKMPLKPIIHNQTWR). The helical transmembrane segment at 57-77 (VGILVFLLGNCLNFISFGYAA) threads the bilayer. Residues 78–79 (QS) are Extracellular-facing. Residues 80-100 (LLAALGSIQFVSNIAFAYVVL) form a helical membrane-spanning segment. Residues 101–105 (NKMVT) lie on the Cytoplasmic side of the membrane. Residues 106 to 126 (VKVLVATAFIVLGNVFLVAFG) traverse the membrane as a helical segment. Over 127–144 (NHQSPVFTPEQLAEKYSN) the chain is Extracellular. The chain crosses the membrane as a helical span at residues 145-165 (VTFLVYCGILILIVAVHHFLY). Over 166 to 184 (RKGEVLISTPGQEISSYWK) the chain is Cytoplasmic. Residues 185-205 (MLLPFSYAVVSGAIGSCSVLF) traverse the membrane as a helical segment. The Extracellular segment spans residues 206 to 222 (AKSLSNLLRLAMSSSYQ). A helical transmembrane segment spans residues 223–243 (LHSWFTYSMLLLFLSTAGFWM). The Cytoplasmic portion of the chain corresponds to 244–255 (TRLNEGLSLYDA). The helical transmembrane segment at 256 to 276 (ILIVPMFQIAWTFFSICTGCI) threads the bilayer. Residues 277 to 288 (YFQEFQVFDALR) are Extracellular-facing. Residues 289 to 309 (TTMFILGMMCVFIGISLLAPD) traverse the membrane as a helical segment. At 310–441 (DTRGNETKDN…MLEKTISSKA (132 aa)) the chain is on the cytoplasmic side. The disordered stretch occupies residues 313–347 (GNETKDNSSSLDSIVSSSVPTEEDRLIPQSSEDGH). The span at 320–330 (SSSLDSIVSSS) shows a compositional bias: low complexity. Basic and acidic residues predominate over residues 334 to 347 (EEDRLIPQSSEDGH).

It belongs to the NIPA (TC 2.A.7) family. In terms of assembly, homodimer.

The protein localises to the cell membrane. Its subcellular location is the early endosome. Its function is as follows. Acts as a Mg(2+) transporter. Can also transport other divalent cations such as Fe(2+), Sr(2+), Ba(2+), Mn(2+) and Co(2+) but to a much less extent than Mg(2+). The polypeptide is Probable magnesium transporter NIPA8 (Arabidopsis thaliana (Mouse-ear cress)).